We begin with the raw amino-acid sequence, 475 residues long: Argininosuccinate lyase (475 aa).

It belongs to the lyase 1 family. Argininosuccinate lyase subfamily.

Its subcellular location is the cytoplasm. The enzyme catalyses 2-(N(omega)-L-arginino)succinate = fumarate + L-arginine. The protein operates within amino-acid biosynthesis; L-arginine biosynthesis; L-arginine from L-ornithine and carbamoyl phosphate: step 3/3. The sequence is that of Argininosuccinate lyase from Streptomyces griseus subsp. griseus (strain JCM 4626 / CBS 651.72 / NBRC 13350 / KCC S-0626 / ISP 5235).